The following is a 327-amino-acid chain: Biotin synthase (327 aa).

Positions 52–279 (NAIQRSTLLS…TSWVRLSAGR (228 aa)) constitute a Radical SAM core domain. 3 residues coordinate [4Fe-4S] cluster: Cys-67, Cys-71, and Cys-74. [2Fe-2S] cluster is bound by residues Cys-111, Cys-142, Cys-202, and Arg-274.

It belongs to the radical SAM superfamily. Biotin synthase family. Homodimer. [4Fe-4S] cluster is required as a cofactor. The cofactor is [2Fe-2S] cluster.

The catalysed reaction is (4R,5S)-dethiobiotin + (sulfur carrier)-SH + 2 reduced [2Fe-2S]-[ferredoxin] + 2 S-adenosyl-L-methionine = (sulfur carrier)-H + biotin + 2 5'-deoxyadenosine + 2 L-methionine + 2 oxidized [2Fe-2S]-[ferredoxin]. It participates in cofactor biosynthesis; biotin biosynthesis; biotin from 7,8-diaminononanoate: step 2/2. In terms of biological role, catalyzes the conversion of dethiobiotin (DTB) to biotin by the insertion of a sulfur atom into dethiobiotin via a radical-based mechanism. The chain is Biotin synthase from Dechloromonas aromatica (strain RCB).